Here is a 726-residue protein sequence, read N- to C-terminus: Catalase-peroxidase (726 aa).

The tryptophyl-tyrosyl-methioninium (Trp-Tyr) (with M-234) cross-link spans 85 to 208 (WHSAGSYRIH…FAATEMGLIY (124 aa)). Histidine 86 functions as the Proton acceptor in the catalytic mechanism. The tryptophyl-tyrosyl-methioninium (Tyr-Met) (with W-85) cross-link spans 208-234 (YVNPEGPMGNPDPSGSAKEIRLAFTRM). Residue histidine 249 coordinates heme b.

This sequence belongs to the peroxidase family. Peroxidase/catalase subfamily. In terms of assembly, homodimer or homotetramer. Requires heme b as cofactor. In terms of processing, formation of the three residue Trp-Tyr-Met cross-link is important for the catalase, but not the peroxidase activity of the enzyme.

The enzyme catalyses H2O2 + AH2 = A + 2 H2O. It carries out the reaction 2 H2O2 = O2 + 2 H2O. In terms of biological role, bifunctional enzyme with both catalase and broad-spectrum peroxidase activity. This is Catalase-peroxidase from Pseudothermotoga lettingae (strain ATCC BAA-301 / DSM 14385 / NBRC 107922 / TMO) (Thermotoga lettingae).